We begin with the raw amino-acid sequence, 406 residues long: Argininosuccinate synthase (406 aa).

Residues 11–19 (AYSGGLDTS) and Ala-38 each bind ATP. L-citrulline contacts are provided by Tyr-91 and Ser-96. Position 121 (Gly-121) interacts with ATP. Residues Thr-123, Asn-127, and Asp-128 each coordinate L-aspartate. Residue Asn-127 participates in L-citrulline binding. Residues Arg-131, Ser-181, Ser-190, Glu-266, and Tyr-278 each contribute to the L-citrulline site.

The protein belongs to the argininosuccinate synthase family. Type 1 subfamily. In terms of assembly, homotetramer.

It is found in the cytoplasm. It catalyses the reaction L-citrulline + L-aspartate + ATP = 2-(N(omega)-L-arginino)succinate + AMP + diphosphate + H(+). The protein operates within amino-acid biosynthesis; L-arginine biosynthesis; L-arginine from L-ornithine and carbamoyl phosphate: step 2/3. The protein is Argininosuccinate synthase of Campylobacter jejuni subsp. jejuni serotype O:6 (strain 81116 / NCTC 11828).